The chain runs to 259 residues: 3-deoxy-manno-octulosonate cytidylyltransferase (259 aa).

The protein belongs to the KdsB family.

It is found in the cytoplasm. The enzyme catalyses 3-deoxy-alpha-D-manno-oct-2-ulosonate + CTP = CMP-3-deoxy-beta-D-manno-octulosonate + diphosphate. Its pathway is nucleotide-sugar biosynthesis; CMP-3-deoxy-D-manno-octulosonate biosynthesis; CMP-3-deoxy-D-manno-octulosonate from 3-deoxy-D-manno-octulosonate and CTP: step 1/1. It participates in bacterial outer membrane biogenesis; lipopolysaccharide biosynthesis. Functionally, activates KDO (a required 8-carbon sugar) for incorporation into bacterial lipopolysaccharide in Gram-negative bacteria. In Xanthomonas axonopodis pv. citri (strain 306), this protein is 3-deoxy-manno-octulosonate cytidylyltransferase.